The sequence spans 613 residues: MAIDCLVLGAGQEIGKSCVVVTINGKKIMFDCGMHMGCDDHNRYPNFSLISKSGDFDNAISCIIITHFHMDHVGALPYFTEVCGYNGPIYMSYPTKALSPLMLEDYRRVMVDRRGEEELFTTTHIANCMKKVIAIDLKQTIQVDEDLQIRAYYAGHVLGAVMVYAKMGDAAIVYTGDYNMTTDRHLGAAKIDRLQLDLLISESTYATTIRGSKYPREREFLQAVHKCVAGGGKALIPSFALGRAQELCMLLDDYWERMNIKVPIYFSSGLTIQANMYYKMLISWTSQNVKEKHNTHNPFDFKNVKDFDRSLIHAPGPCVLFATPGMLCAGFSLEVFKHWAPSPLNLVALPGYSVAGTVGHKLMAGKPTTVDLYNGTKVDVRCKVHQVAFSPHTDAKGIMDLTKFLSPKNVVLVHGEKPSMMILKEKITSELDIPCFVPANGETVSFASTTYIKANASDMFLKSCSNPNFKFSNSTQLRVTDHRTADGVLVIEKSKKAKIVHQDEISEVLHEKNHVVSLAHCCPVKVKGESEDDDVDLIKQLSAKILKTVSGAQIHESENCLQVASFKGSLCLKDKCMHRSSSSSSEAVFLCCNWSIADLELGWEIINAIKLNH.

An HXHXDH motif motif is present at residues 67 to 72; sequence HFHMDH.

The protein belongs to the metallo-beta-lactamase superfamily. RNA-metabolizing metallo-beta-lactamase-like family. INTS11 subfamily. As to quaternary structure, component of the CPSF complex, at least composed of CPSF160, CPSF100, CPSF73-I, CPSF73-II, CPSF30, FY and FIPS5. Interacts with CPSF30, CPSF100, CPSF160 and FY. Highly expressed in senescence leaves, petals, stamens, pollen and late stages of siliques with seeds. Also detected in roots, stems, leaves and seedlings.

It is found in the nucleus. In terms of biological role, component of the cleavage and polyadenylation specificity factor (CPSF) complex that play a key role in pre-mRNA 3'-end formation, recognizing the AAUAAA signal sequence and interacting with poly(A) polymerase and other factors to bring about cleavage and poly(A) addition. May function as mRNA 3'-end-processing endonuclease and also be involved in the histone 3'-end pre-mRNA processing. The sequence is that of Cleavage and polyadenylation specificity factor subunit 3-II (CPSF73-II) from Arabidopsis thaliana (Mouse-ear cress).